The chain runs to 440 residues: Xylose isomerase (440 aa).

Active-site residues include His100 and Asp103. The Mg(2+) site is built by Glu231, Glu267, His270, Asp295, Asp306, Asp308, and Asp338.

The protein belongs to the xylose isomerase family. As to quaternary structure, homotetramer. Mg(2+) is required as a cofactor.

It localises to the cytoplasm. It catalyses the reaction alpha-D-xylose = alpha-D-xylulofuranose. This chain is Xylose isomerase, found in Burkholderia thailandensis (strain ATCC 700388 / DSM 13276 / CCUG 48851 / CIP 106301 / E264).